Reading from the N-terminus, the 39-residue chain is Photosystem I reaction center subunit IX (39 aa).

A helical membrane pass occupies residues 7–27 (FLTTAPVAFILFSSFVFALFI).

This sequence belongs to the PsaJ family.

The protein resides in the cellular thylakoid membrane. May help in the organization of the PsaE and PsaF subunits. The chain is Photosystem I reaction center subunit IX from Synechococcus sp. (strain JA-2-3B'a(2-13)) (Cyanobacteria bacterium Yellowstone B-Prime).